We begin with the raw amino-acid sequence, 326 residues long: Vacuolar protein sorting-associated protein 26A-A (326 aa).

Residues 306-326 (TNFHQRFEPQEPQASAEEPEI) form a disordered region. The span at 315 to 326 (QEPQASAEEPEI) shows a compositional bias: low complexity.

The protein belongs to the VPS26 family. In terms of assembly, component of the heterotrimeric retromer cargo-selective complex (CSC) which is believed to associate with variable sorting nexins to form functionally distinct retromer complex variants.

The protein localises to the cytoplasm. Its subcellular location is the endosome membrane. The protein resides in the early endosome. Its function is as follows. Acts as a component of the retromer cargo-selective complex (CSC). The CSC is believed to be the core functional component of retromer or respective retromer complex variants acting to prevent missorting of selected transmembrane cargo proteins into the lysosomal degradation pathway. Retromer mediates retrograde transport of cargo proteins from endosomes to the trans-Golgi network (TGN). This chain is Vacuolar protein sorting-associated protein 26A-A (vps26a-a), found in Xenopus laevis (African clawed frog).